The sequence spans 389 residues: Flap endonuclease 1 (389 aa).

The tract at residues 1-110 (MGIKGLMKLL…GELAKRSDRR (110 aa)) is N-domain. Residue Asp-35 coordinates Mg(2+). DNA-binding residues include Arg-48 and Arg-76. Position 92 (Asp-92) interacts with Mg(2+). The interval 103 to 124 (LAKRSDRRQEAQKALEEATEKG) is disordered. An I-domain region spans residues 128 to 259 (DIDRFNKRLV…KKAYAGIKEH (132 aa)). Mg(2+) contacts are provided by Glu-164, Glu-166, Asp-185, and Asp-187. A DNA-binding site is contributed by Glu-164. Residues Gly-237 and Asp-239 each contribute to the DNA site. Asp-239 is a binding site for Mg(2+). The segment at 350–358 (SQKRLDSFF) is interaction with PCNA. The tract at residues 362 to 389 (PSANGAKKRKAPAAKGGKKAATAKKGKK) is disordered. Residues 367 to 389 (AKKRKAPAAKGGKKAATAKKGKK) show a composition bias toward basic residues.

Belongs to the XPG/RAD2 endonuclease family. FEN1 subfamily. As to quaternary structure, interacts with PCNA. Three molecules of FEN1 bind to one PCNA trimer with each molecule binding to one PCNA monomer. PCNA stimulates the nuclease activity without altering cleavage specificity. Mg(2+) serves as cofactor. Phosphorylated. Phosphorylation upon DNA damage induces relocalization to the nuclear plasma.

The protein localises to the nucleus. Its subcellular location is the nucleolus. It is found in the nucleoplasm. The protein resides in the mitochondrion. In terms of biological role, structure-specific nuclease with 5'-flap endonuclease and 5'-3' exonuclease activities involved in DNA replication and repair. During DNA replication, cleaves the 5'-overhanging flap structure that is generated by displacement synthesis when DNA polymerase encounters the 5'-end of a downstream Okazaki fragment. It enters the flap from the 5'-end and then tracks to cleave the flap base, leaving a nick for ligation. Also involved in the long patch base excision repair (LP-BER) pathway, by cleaving within the apurinic/apyrimidinic (AP) site-terminated flap. Acts as a genome stabilization factor that prevents flaps from equilibrating into structures that lead to duplications and deletions. Also possesses 5'-3' exonuclease activity on nicked or gapped double-stranded DNA, and exhibits RNase H activity. Also involved in replication and repair of rDNA and in repairing mitochondrial DNA. The sequence is that of Flap endonuclease 1 from Phytophthora infestans (strain T30-4) (Potato late blight agent).